The primary structure comprises 339 residues: Leucine-rich repeat-containing protein 59 (339 aa).

Residues Met-1–Arg-282 are Cytoplasmic-facing. LRR repeat units follow at residues Ser-10–Pro-31, Lys-40–Leu-61, His-63–Leu-84, and Ser-86–Leu-107. Positions Met-181–Thr-254 form a coiled coil. The disordered stretch occupies residues Ser-186–Ser-275. Residues Glu-187 to Gln-256 show a composition bias toward basic and acidic residues. Residues Ala-283–Leu-300 form a helical membrane-spanning segment. Residues Thr-301–Gln-339 are Lumenal-facing.

As to quaternary structure, interacts with SGO1.

The protein localises to the microsome membrane. The protein resides in the endoplasmic reticulum membrane. It localises to the nucleus envelope. In terms of biological role, required for nuclear import of FGF1. This is Leucine-rich repeat-containing protein 59 (LRRC59) from Gallus gallus (Chicken).